A 955-amino-acid chain; its full sequence is MTTPRFLPSSPPGQARSDLYTTLVSSSPDLPSINELVSRYAKKPKPLRSGSNAASIPTTATTTFTTAAKLLQSAQAEQADLVETLPPPRAKTKAKPKQKDPPEVVDLSPDLPVNIPEPQPERRKARKTANGVTKKKRGGGEESVADDATNEITTPTKNQPWKFFKSPSPRTTSDLEITGFQEVAATTAPVTTSTTDLTKGTASAQNKVTKSRVRKTSSAASRKKKAETVSRHFAVPDDVSTAPEPITVPDDAPEEQLFNLEPAVARRLDWTPPRETNTADLCPVSSNAKEVTSTLDGALSAAPAAVQNVFLTLQDKFAYPVEQVARRPDSPSKELGPPPEVIKKRKVIQLVGPSNDSKIPNQASPVKSKAPKKKPRTITDLATAAYTTEGKQSNAPAKKGTLTSYLEGQGEQVFQHCHPDSRLRKPERKRKPKGRGQVLLSPLSAIDQSARQDFVFGTSSQLAQEHSPTFLRDLHAALRQSNDFSDDPFASPIMAAPQGRKLWTAGARGEEGDLMNIEVIDLVDSPAFPDDPDAIVRAEMQKSPSRSEPKGIKNRRTPMVNLDSSEIDISEPHARDLESANSAEHTLKTQASKSTHFASTTPPRPTKITMVPACENTAEPPIVASDVDSDNEPPPSNQQAYQMPPPPRPVVPEETAIPRPNFEVMTDTQLSKQVSSYGFKSVKKRSAMIALLNQCWESKAGATGAAGQSSAFATTSRTSAPRGPRGKTSTAAAAAKSPTKRPVGRPRKNSVGASGDVTVVEATTPVKRPRGRPKKNAKAEASPDMMQNIAASMPPTVAAAVKTPRRRKKAATQPAVEILDSDGEAGLSPSPSLSPEPVFSSPEKDSVDVSIGEHTTMSLAVTPTAQQAELFTRITRAVKSAPRSTDPDKPSWHEKMLMYDPIVLEDLAAWLNSGQLDRVGYDGEVAPADVKMWCESKSICCLWRMSYRGRERKRL.

Disordered regions lie at residues 75–173 (QAEQ…RTTS), 189–231 (PVTT…TVSR), 352–376 (GPSN…KKPR), 539–608 (EMQK…PTKI), 621–648 (PIVA…PPPR), 705–784 (AAGQ…ASPD), and 819–846 (LDSD…EKDS). Positions 123-137 (RKARKTANGVTKKKR) are enriched in basic residues. Polar residues predominate over residues 150 to 159 (NEITTPTKNQ). Residues 189–198 (PVTTSTTDLT) are compositionally biased toward low complexity. Basic residues predominate over residues 209–225 (TKSRVRKTSSAASRKKK). The span at 352–362 (GPSNDSKIPNQ) shows a compositional bias: polar residues. Residues 539-551 (EMQKSPSRSEPKG) are compositionally biased toward basic and acidic residues. Residues 579-601 (SANSAEHTLKTQASKSTHFASTT) are compositionally biased toward polar residues. 2 stretches are compositionally biased toward low complexity: residues 705-720 (AAGQ…RTSA) and 727-737 (KTSTAAAAAKS). Basic residues-rich tracts occupy residues 738–748 (PTKRPVGRPRK) and 767–776 (KRPRGRPKKN). Residues 828 to 841 (SPSPSLSPEPVFSS) show a composition bias toward low complexity.

Belongs to the SLX4 family. In terms of assembly, forms a heterodimer with SLX1. In terms of processing, phosphorylated in response to DNA damage.

It is found in the nucleus. Regulatory subunit of the SLX1-SLX4 structure-specific endonuclease that resolves DNA secondary structures generated during DNA repair and recombination. Has endonuclease activity towards branched DNA substrates, introducing single-strand cuts in duplex DNA close to junctions with ss-DNA. This Pyricularia oryzae (strain 70-15 / ATCC MYA-4617 / FGSC 8958) (Rice blast fungus) protein is Structure-specific endonuclease subunit SLX4.